Here is a 267-residue protein sequence, read N- to C-terminus: Tryptophan synthase alpha chain (267 aa).

Active-site proton acceptor residues include Glu49 and Asp60.

This sequence belongs to the TrpA family. In terms of assembly, tetramer of two alpha and two beta chains.

It carries out the reaction (1S,2R)-1-C-(indol-3-yl)glycerol 3-phosphate + L-serine = D-glyceraldehyde 3-phosphate + L-tryptophan + H2O. The protein operates within amino-acid biosynthesis; L-tryptophan biosynthesis; L-tryptophan from chorismate: step 5/5. The alpha subunit is responsible for the aldol cleavage of indoleglycerol phosphate to indole and glyceraldehyde 3-phosphate. The chain is Tryptophan synthase alpha chain from Solibacter usitatus (strain Ellin6076).